The following is a 600-amino-acid chain: UvrABC system protein C (600 aa).

The GIY-YIG domain occupies 15–100 (NSAGVYQYFN…IKQLHPKYNI (86 aa)). In terms of domain architecture, UVR spans 203-238 (SVLLKNLEKQMLVLAQNENYEEAAKVRDQIAMIKDL).

The protein belongs to the UvrC family. Interacts with UvrB in an incision complex.

Its subcellular location is the cytoplasm. Its function is as follows. The UvrABC repair system catalyzes the recognition and processing of DNA lesions. UvrC both incises the 5' and 3' sides of the lesion. The N-terminal half is responsible for the 3' incision and the C-terminal half is responsible for the 5' incision. The sequence is that of UvrABC system protein C from Campylobacter jejuni (strain RM1221).